Here is a 73-residue protein sequence, read N- to C-terminus: UPF0154 protein MG335.1 homolog (73 aa).

A helical transmembrane segment spans residues 6-26; that stretch reads LALGLGIPLSLLVGVIIGYFI.

This sequence belongs to the UPF0154 family.

It localises to the membrane. In Mycoplasma pneumoniae (strain ATCC 29342 / M129 / Subtype 1) (Mycoplasmoides pneumoniae), this protein is UPF0154 protein MG335.1 homolog.